The chain runs to 185 residues: Ribosome-recycling factor (185 aa).

This sequence belongs to the RRF family.

The protein resides in the cytoplasm. Responsible for the release of ribosomes from messenger RNA at the termination of protein biosynthesis. May increase the efficiency of translation by recycling ribosomes from one round of translation to another. This is Ribosome-recycling factor from Campylobacter fetus subsp. fetus (strain 82-40).